The primary structure comprises 638 residues: Neuroendocrine convertase 2 (638 aa).

Residues M1–A25 form the signal peptide. Residues E26–R109 constitute a propeptide that is removed on maturation. The Peptidase S8 domain occupies Q129–V453. Residues D167 and H208 each act as charge relay system in the active site. 2 disulfides stabilise this stretch: C225–C376 and C317–C347. N-linked (GlcNAc...) asparagine glycosylation occurs at N375. S384 functions as the Charge relay system in the catalytic mechanism. Residues T461–A597 enclose the P/Homo B domain. An intrachain disulfide couples C468 to C494. N-linked (GlcNAc...) asparagine glycans are attached at residues N514 and N524.

Belongs to the peptidase S8 family. Furin subfamily.

It is found in the cytoplasmic vesicle. Its subcellular location is the secretory vesicle. The protein localises to the secreted. It carries out the reaction Release of protein hormones and neuropeptides from their precursors, generally by hydrolysis of -Lys-Arg-|- bonds.. Its function is as follows. Serine endopeptidase which is involved in the processing of hormone and other protein precursors at sites comprised of pairs of basic amino acid residues. Responsible for the release of glucagon from proglucagon in pancreatic A cells. The protein is Neuroendocrine convertase 2 (PCSK2) of Bos taurus (Bovine).